Reading from the N-terminus, the 178-residue chain is Crossover junction endodeoxyribonuclease RuvC (178 aa).

Catalysis depends on residues D7, E68, and D141. Residues D7, E68, and D141 each contribute to the Mg(2+) site.

The protein belongs to the RuvC family. As to quaternary structure, homodimer which binds Holliday junction (HJ) DNA. The HJ becomes 2-fold symmetrical on binding to RuvC with unstacked arms; it has a different conformation from HJ DNA in complex with RuvA. In the full resolvosome a probable DNA-RuvA(4)-RuvB(12)-RuvC(2) complex forms which resolves the HJ. Requires Mg(2+) as cofactor.

The protein resides in the cytoplasm. It catalyses the reaction Endonucleolytic cleavage at a junction such as a reciprocal single-stranded crossover between two homologous DNA duplexes (Holliday junction).. The RuvA-RuvB-RuvC complex processes Holliday junction (HJ) DNA during genetic recombination and DNA repair. Endonuclease that resolves HJ intermediates. Cleaves cruciform DNA by making single-stranded nicks across the HJ at symmetrical positions within the homologous arms, yielding a 5'-phosphate and a 3'-hydroxyl group; requires a central core of homology in the junction. The consensus cleavage sequence is 5'-(A/T)TT(C/G)-3'. Cleavage occurs on the 3'-side of the TT dinucleotide at the point of strand exchange. HJ branch migration catalyzed by RuvA-RuvB allows RuvC to scan DNA until it finds its consensus sequence, where it cleaves and resolves the cruciform DNA. The chain is Crossover junction endodeoxyribonuclease RuvC from Parafrankia sp. (strain EAN1pec).